The sequence spans 389 residues: Pre-mRNA-splicing factor PRP46 (389 aa).

7 WD repeats span residues 83–123, 126–165, 173–212, 215–254, 257–298, 308–347, and 356–389; these read AHQG…LKAV, GHVL…SDAG, GHLG…EAMT, GHTN…TELL, NHSK…NEFG, DNSR…LQQS, and PEQS…GTSY.

It belongs to the WD repeat PRL1/PRL2 family. Associated with the spliceosome.

Its subcellular location is the cytoplasm. It localises to the nucleus. In terms of biological role, involved in pre-mRNA splicing and required for cell cycle progression at G2/M. The polypeptide is Pre-mRNA-splicing factor PRP46 (PRP46) (Candida albicans (strain SC5314 / ATCC MYA-2876) (Yeast)).